The following is a 201-amino-acid chain: Probable GTP-binding protein EngB (201 aa).

The 174-residue stretch at 23–196 (TGPEIALAGR…HEAVEEILSM (174 aa)) folds into the EngB-type G domain. Residues 31-38 (GRSNVGKS), 58-62 (GKTQM), 76-79 (DLPG), 143-146 (TKAD), and 175-177 (YSA) each bind GTP. The Mg(2+) site is built by Ser38 and Thr60.

Belongs to the TRAFAC class TrmE-Era-EngA-EngB-Septin-like GTPase superfamily. EngB GTPase family. Requires Mg(2+) as cofactor.

Functionally, necessary for normal cell division and for the maintenance of normal septation. This is Probable GTP-binding protein EngB from Desulfitobacterium hafniense (strain DSM 10664 / DCB-2).